The primary structure comprises 118 residues: MAEEGQVIGVHTVDAWNEHLQKGIDDKKLIVVDFTASWCGPCKFIASFYAELAKKMPTVTFLKVDVDELKSVATDWAVEAMPTFMFLKEGKIVDKVVGAKKDELQQTIAKHISSTSTA.

Positions 2 to 113 (AEEGQVIGVH…LQQTIAKHIS (112 aa)) constitute a Thioredoxin domain. Residues C39 and C42 each act as nucleophile in the active site. C39 and C42 are disulfide-bonded.

It belongs to the thioredoxin family. Plant H-type subfamily.

The protein localises to the cytoplasm. Participates in various redox reactions through the reversible oxidation of the active center dithiol to a disulfide. The H form is known to activate a number of cytosolic enzymes. The chain is Thioredoxin H-type 2 from Nicotiana tabacum (Common tobacco).